We begin with the raw amino-acid sequence, 716 residues long: Tensin-4 (716 aa).

A signal peptide spans 1–17 (MSQVMSSPLLAGGPAVG). Disordered stretches follow at residues 119–274 (LPPG…VSML), 301–322 (QSSS…NLGP), 334–366 (VPSN…PSIT), and 379–436 (GFPE…RDMQ). Residues 138 to 150 (KKKEEPEALDIKY) are compositionally biased toward basic and acidic residues. Over residues 197–206 (SSESLIFSGS) the composition is skewed to polar residues. Residues 214 to 228 (PAPPSAVPSSHPPTS) show a composition bias toward pro residues. Phosphoserine is present on Ser248. Polar residues predominate over residues 265 to 274 (PQLSSRVSML). The span at 402-419 (ATSSSMPCPATRSHSQTL) shows a compositional bias: polar residues. In terms of domain architecture, SH2 spans 449-556 (WFKPSISREQ…ALPCKLVIPQ (108 aa)). Residues 583–704 (CHALYLSSVS…TLQPASQVIR (122 aa)) form the PTB domain.

This sequence belongs to the PTEN phosphatase protein family. Interacts (via SH2 domain) with Rho GTPase-activating protein DLC1 (via C-terminus); the interaction is independent of DLC1 tyrosine phosphorylation. Interacts with integrin ITGB1; the interaction displaces tensin TNS3 from the ITGB1 cytoplasmic tail and promotes ITGB1 stability. Interacts (via SH2 domain) with E3 ubiquitin-protein ligase CBL (phosphorylated on 'Tyr-782'); the interaction is enhanced in the presence of EGF and reduces interaction of CBL with EGFR. Interacts (via SH2 domain) with receptor tyrosine kinase MET (when phosphorylated); the interaction increases MET protein stability.

Its subcellular location is the cell junction. The protein localises to the focal adhesion. It localises to the cytoplasm. It is found in the cytoskeleton. In terms of biological role, promotes EGF-induced cell migration by displacing tensin TNS3 from the cytoplasmic tail of integrin ITGB1 which results in dissociation of TNS3 from focal adhesions, disassembly of actin stress fibers and initiation of cell migration. Suppresses ligand-induced degradation of EGFR by reducing EGFR ubiquitination in the presence of EGF. Increases MET protein stability by inhibiting MET endocytosis and subsequent lysosomal degradation which leads to increased cell survival, proliferation and migration. This chain is Tensin-4 (TNS4), found in Bos taurus (Bovine).